The chain runs to 310 residues: 5'-adenylylsulfate reductase-like 4 (310 aa).

The first 22 residues, 1–22 (MEKEILLLLLVIMFLTVADVDA), serve as a signal peptide directing secretion. The region spanning 49–168 (GVESDERPRF…LVAFYSDVTG (120 aa)) is the Thioredoxin domain. N-linked (GlcNAc...) asparagine glycans are attached at residues Asn-143 and Asn-190. Residues 217 to 237 (LAIVFVLLRLLHLIYPTLVVF) traverse the membrane as a helical segment.

The protein localises to the membrane. This chain is 5'-adenylylsulfate reductase-like 4 (APRL4), found in Arabidopsis thaliana (Mouse-ear cress).